Reading from the N-terminus, the 186-residue chain is Transposon Tn501 resolvase (186 aa).

A Resolvase/invertase-type recombinase catalytic domain is found at 4–137 (HRIGYVRVSS…EGITLAKQRG (134 aa)). The active-site O-(5'-phospho-DNA)-serine intermediate is serine 12. The tract at residues 17–38 (NPERQLEQTQVSKVFTDKASGK) is disordered. Positions 164 to 183 (KAQLAREFNISRETLYQYLR) form a DNA-binding region, H-T-H motif.

It belongs to the site-specific recombinase resolvase family.

Functionally, resolvase catalyzes the resolution (a site-specific recombination) of the cointegrated replicon to yield the final transposition products. In Pseudomonas aeruginosa, this protein is Transposon Tn501 resolvase (tnpR).